The sequence spans 692 residues: Putative receptor-like protein kinase At1g80870 (692 aa).

Residues 20-40 (LFLILTISSSLVIFFAILYFI) form a helical membrane-spanning segment. Residues 81-673 (FDESNVIGKG…GEMDISSTAF (593 aa)) form the Protein kinase domain. ATP contacts are provided by residues 87–95 (IGKGGSGTV) and Lys109. Asp206 functions as the Proton acceptor in the catalytic mechanism. 2 disordered regions span residues 427–446 (EISE…HRNM) and 511–533 (RRKS…GSEM). Composition is skewed to basic residues over residues 432–444 (KNKR…KKHR) and 511–524 (RRKS…KKKN).

This sequence belongs to the protein kinase superfamily. Ser/Thr protein kinase family.

Its subcellular location is the cell membrane. The enzyme catalyses L-seryl-[protein] + ATP = O-phospho-L-seryl-[protein] + ADP + H(+). It catalyses the reaction L-threonyl-[protein] + ATP = O-phospho-L-threonyl-[protein] + ADP + H(+). The chain is Putative receptor-like protein kinase At1g80870 from Arabidopsis thaliana (Mouse-ear cress).